A 159-amino-acid chain; its full sequence is Ribosomal RNA large subunit methyltransferase H (159 aa).

S-adenosyl-L-methionine-binding positions include Gly-108 and 127 to 132; that span reads FGKLTM.

This sequence belongs to the RNA methyltransferase RlmH family. As to quaternary structure, homodimer.

The protein localises to the cytoplasm. The catalysed reaction is pseudouridine(1915) in 23S rRNA + S-adenosyl-L-methionine = N(3)-methylpseudouridine(1915) in 23S rRNA + S-adenosyl-L-homocysteine + H(+). In terms of biological role, specifically methylates the pseudouridine at position 1915 (m3Psi1915) in 23S rRNA. The chain is Ribosomal RNA large subunit methyltransferase H from Lactobacillus helveticus (strain DPC 4571).